Here is a 455-residue protein sequence, read N- to C-terminus: Exodeoxyribonuclease 7 large subunit (455 aa).

This sequence belongs to the XseA family. Heterooligomer composed of large and small subunits.

The protein resides in the cytoplasm. The enzyme catalyses Exonucleolytic cleavage in either 5'- to 3'- or 3'- to 5'-direction to yield nucleoside 5'-phosphates.. Bidirectionally degrades single-stranded DNA into large acid-insoluble oligonucleotides, which are then degraded further into small acid-soluble oligonucleotides. In Escherichia coli O7:K1 (strain IAI39 / ExPEC), this protein is Exodeoxyribonuclease 7 large subunit.